The following is a 314-amino-acid chain: Protein translocase subunit SecF (314 aa).

The next 6 helical transmembrane spans lie at 17 to 37, 137 to 157, 158 to 178, 188 to 210, 250 to 270, and 272 to 292; these read AVAVSAILVAIALISMGTRGL, QGTYAILYALLAIVAYIWWRY, ELNFGVAAVIALVHDVVITLG, SLPVLAAILTVIGYSLNDTIVVF, TLIVVAVLYFFGGEVINGFAF, and LLVGIIVGTYSSIFVASLLLV.

This sequence belongs to the SecD/SecF family. SecF subfamily. As to quaternary structure, forms a complex with SecD. Part of the essential Sec protein translocation apparatus which comprises SecA, SecYEG and auxiliary proteins SecDF. Other proteins may also be involved.

It is found in the cell inner membrane. Part of the Sec protein translocase complex. Interacts with the SecYEG preprotein conducting channel. SecDF uses the proton motive force (PMF) to complete protein translocation after the ATP-dependent function of SecA. In Desulfurispirillum indicum (strain ATCC BAA-1389 / DSM 22839 / S5), this protein is Protein translocase subunit SecF.